A 267-amino-acid polypeptide reads, in one-letter code: Distal basal body ring component protein (267 aa).

Residues 1-29 (MKAFLFAAAATLVITALSAPAFAGTPVTL) form the signal peptide.

FlaD is a subunit of the flagellar transenvelope basal body.

It is found in the periplasm. Its subcellular location is the bacterial flagellum basal body. Functionally, flaD might be the structural protein of the distal basal body ring P, or it is necessary for the assembly of the P ring. The polypeptide is Distal basal body ring component protein (flaD) (Caulobacter vibrioides (strain ATCC 19089 / CIP 103742 / CB 15) (Caulobacter crescentus)).